The sequence spans 992 residues: Disks large-associated protein 4 (992 aa).

Basic and acidic residues predominate over residues 1–20 (MKGLGDSRPRHLSDSLDPPH). 2 disordered regions span residues 1–31 (MKGL…DRNP) and 157–225 (MEGT…PASG). Gly residues predominate over residues 162–171 (GKVGGNGSKK). Basic and acidic residues predominate over residues 172-194 (GGLEDGKGRRAKSKERAKAGEPK). Polar residues predominate over residues 199-208 (SNISGWWSSD). Phosphoserine is present on residues S206 and S207. Position 290 is an omega-N-methylarginine (R290). A disordered region spans residues 342-396 (TTLLSPRDMDSTAEGPIPCRRMRSGSYIKAMGDEDSDESGGGSPKPSPKTAARRQ). S377, S380, S384, S388, S405, S415, and S421 each carry phosphoserine. Disordered stretches follow at residues 527-751 (SVSL…GPRQ), 763-798 (SYGD…AQPG), and 915-992 (TPEK…QTRL). The span at 528 to 554 (VSLQSLSPPPSTGSLSNSRTLPSSSCL) shows a compositional bias: low complexity. Polar residues predominate over residues 576-591 (VTVQSSTESAQDTYLD). S580, S581, S609, S611, S665, and S744 each carry phosphoserine. Residues 600–620 (TSQSGLSNSSDSLDSSTRPPS) show a composition bias toward low complexity. A Phosphothreonine modification is found at T915. Basic and acidic residues-rich tracts occupy residues 915–925 (TPEKRKEEKKP) and 940–958 (VSRD…EARK). A compositionally biased stretch (polar residues) spans 969–978 (VRQNSATESA). S973 bears the Phosphoserine mark.

Belongs to the SAPAP family. In terms of assembly, interacts with DLG1 and DLG4/PSD-95.

It is found in the membrane. Functionally, may play a role in the molecular organization of synapses and neuronal cell signaling. Could be an adapter protein linking ion channel to the subsynaptic cytoskeleton. May induce enrichment of PSD-95/SAP90 at the plasma membrane. In Mus musculus (Mouse), this protein is Disks large-associated protein 4 (Dlgap4).